Consider the following 187-residue polypeptide: Homeobox expressed in ES cells 1-B (187 aa).

The homeobox DNA-binding region spans G110–H169.

This sequence belongs to the ANF homeobox family. As to quaternary structure, the N-terminus interacts with the LIM 2 domain of zyx. First expressed at a low level in the late blastula stage (stage 9) in most cells of the animal half of the embryo. Following this, predominantly expressed in two zones; the dorsal blastopore lip (Spemann organizer) at the beginning of gastrulation, and subsequently in the anterior part of the neural anlage (the region of future forebrain).

The protein localises to the nucleus. Its function is as follows. Regulates the earliest stages of development of the anterior neural plate. Plays a role in forebrain development by inhibiting the expression of otx2 and pax6 in the rostral region of the anterior neural plate. Necessary for both neural differentiation and neural patterning. Controls Spemann organizer development. May act as a transcriptional repressor. The sequence is that of Homeobox expressed in ES cells 1-B (hesx1-b) from Xenopus laevis (African clawed frog).